An 80-amino-acid polypeptide reads, in one-letter code: DNA-binding protein HU-like (80 aa).

It belongs to the bacterial histone-like protein family.

Its function is as follows. Histone-like DNA-binding protein which is capable of wrapping DNA to stabilize it, and thus to prevent its denaturation under extreme environmental conditions. The sequence is that of DNA-binding protein HU-like from Rickettsia prowazekii (strain Madrid E).